The following is a 1771-amino-acid chain: MDFTPSTGTPGEFRRMKLTYFTNEFPSDDLPGLARQLHLHSKDRRHHILARFLQDATLAIREEVAQLPPALKDLLPPFESVLTFVEYPEMRKGPLCGSIDGVLLSTVELATFIGYFEEFPETYDFESAHTYLAGLGIGLLSAAAVSLSRTLADIAYVGSEVVRMAFRLGVLVDNVSEQLQPRELASHGTPDSWAYVLPNVTREAVQQELDVIHSGEGIPETGKIFVSAFSQSSVTVSGPPSRLKDLFRTSDFFRDRRFFSLPVFGGLCHAKHIYTETHVQQVVRTKPMDMLSARVLPRIPIFSPSSGSPFPAATATELFEGIISEILTQVIQWDNVIQGALDQINILSPSEFQVLVFRISLPIHDLMAAVNTELKGFQATTKEIMPWVSHTAKDRIPREPSQSKIAIVGMSCRLPGGATNTEKFWDVLEQGLDVYRTIPPDRFDVNTHYDPAGKRVNASHTPYGCFIEEPGLFDAPFFNMSPREAQQTDPMQRLALVTAYEALERAGYVPNRTPATNKHRIGTFYGQASDDYREVNTAQDVDTYFITGGCRAFGPGRINYFFKFWGPSYSIDTACSSSLATVEAACTSLWNGSTDTAVVGGVNVLTNSDAFAGLSRGHFLSKIPGACKTWDCNADGYCRADGVISLVMKRLEDAQADNDNILGVILGAATNHSADAVSITHPHAGAQAHLFRDVLRNAGVDSHDVSYVELHGTGTQAGDFEEMKSVTDVFAPLTKRRSPNQPLYVGAVKANVGHGEAVAGVTALLKVLLMLQKSVIPPHVGIKNSINPQIPKDLDKRNLHIPYEKQSWKSTPGKSRIAVVNNFSAAGGNTSVVLEEGPVTELTGVDPRPSHVVAISAKSKVSLKGNLERFAAYIDTNPGVSLSHLSYTTMARRHHHNHRLAAAVSDAEQLKKQLTSWMQSVESHRPISATGPPPVAFAFTGQGASYKSMNVELFHTLPSFREQMMHLDALAQQQGFPSFIPAIDGSHPQDHAHSQVVTQLALTGTQIALAKYWMSLGVRPEVVVGHSLGEFAALHIAGVLSAGDTLFLVGRRAQLLEQHCVQGSYQMLAVRASVSQIEEIADGRLYEVACINGPKETVLSGTRQEIRNIAEHLMTKGYKCTALEVAFAGHSAQLDPILDTYEQIATKGAIFHPPNLPIISPLLGKVIFDDKTVNATYMRRASRETVNFHAALETAQRISTVDDTTAWVEIGPHPVCMGFIRSTLQSTALTVPSLRRGEESWVTITRSLSSLHCAGVEVHWNEFHRPFEQALRLLDLPTYSWNDKNYWIQYNGDWALTKGNTFYSSQQQNSAAVDELPSGPRTSTVQKIVEESFDGRAARVVMQSDLMQSDLLEAAYGHKMNGCGVVTSSIHADVGFTLGQYVYKKLNPNTKVPAMNMASLEVLKGLVANKNTDKPQRFQVTVTTTDINSRILQLEWRNVHAHGPAEEPFASAKIYYCDASEWLLSWRPTLHLVQGRIQALERLAEAGIANRFSGRMAYNLFANSLVDYAGKYRGMQSVVMHELEAFADVTLTVEKAGTWTVPPYFIDSVAHLAGFIMNVSDAIDNQKNFCVTPGWNSMRFAAPLVAGGRYRSYVKMIPTVEDDSVYLGDVYILQNDMIIGMVGGIKFRRYPRLLLNRFFSPSDDSTAKTAAGETPPAPTTTAATAITAATSTTSTTSTASTGQPPKVDETSPVDSNSTAARALALVAKEAGMEVTDLQDDAIFANLGVDSLMSLVIAEKFREELGVVVAGSLFLEYPTVGDLKSWLLEYYS.

The N-terminal acylcarrier protein transacylase domain (SAT) stretch occupies residues H38–H269. The Ketosynthase family 3 (KS3) domain maps to Q402–E836. Active-site for beta-ketoacyl synthase activity residues include C575, H711, and H754. Positions F937–E1257 are malonyl-CoA:ACP transacylase (MAT) domain. Residues T1322–P1641 are product template (PT) domain. The interval Q1326 to E1461 is N-terminal hotdog fold. In terms of domain architecture, PKS/mFAS DH spans Q1326–N1636. Catalysis depends on H1358, which acts as the Proton acceptor; for dehydratase activity. The C-terminal hotdog fold stretch occupies residues I1488–N1636. D1547 functions as the Proton donor; for dehydratase activity in the catalytic mechanism. Residues A1668–T1681 show a composition bias toward low complexity. A disordered region spans residues A1668–S1695. The Carrier domain occupies V1693–Y1770. The residue at position 1730 (S1730) is an O-(pantetheine 4'-phosphoryl)serine.

It carries out the reaction holo-[ACP] + 8 malonyl-CoA + 8 H(+) = atrochrysone carboxyl-[ACP] + 8 CO2 + 8 CoA + 2 H2O. Its pathway is secondary metabolite biosynthesis. In terms of biological role, non-reducing polyketide synthase; part of the gene cluster that mediates the biosynthesis of geodin, an intermediate in the biosynthesis of other natural products. The pathway begins with the synthesis of atrochrysone thioester by the polyketide synthase (PKS) gedC. The atrochrysone carboxyl ACP thioesterase gedB then breaks the thioester bond and releases the atrochrysone carboxylic acid from gedC. The atrochrysone carboxylic acid is then converted to atrochrysone which is further transformed into emodinanthrone. The next step is performed by the emodinanthrone oxygenase gedH that catalyzes the oxidation of emodinanthrone to emodin. Emodin O-methyltransferase encoded probably by gedA then catalyzes methylation of the 8-hydroxy group of emodin to form questin. Ring cleavage of questin by questin oxidase gedK leads to desmethylsulochrin via several intermediates including questin epoxide. Another methylation step probably catalyzed by methyltransferase gedG leads to the formation of sulochrin which is further converted to dihydrogeodin by the sulochrin halogenase gedL. Finally, the dihydrogeodin oxidase gedJ catalyzes the stereospecific phenol oxidative coupling reaction converting dihydrogeodin to geodin. The protein is Atrochrysone carboxylic acid synthase of Aspergillus terreus (strain NIH 2624 / FGSC A1156).